A 383-amino-acid chain; its full sequence is Putative F-box protein At1g77650 (383 aa).

The F-box domain maps to 1 to 47 (MAFLSLPSDVVEEFLFKTPIESLVLCKPTCKQLYALCNDKRFIYNHL).

The protein is Putative F-box protein At1g77650 of Arabidopsis thaliana (Mouse-ear cress).